The chain runs to 225 residues: Platelet-derived growth factor subunit B (225 aa).

The signal sequence occupies residues leucine 1–alanine 12. Residues glutamate 13–arginine 73 constitute a propeptide, removed in mature form. N-linked (GlcNAc...) asparagine glycosylation is present at asparagine 55. Cystine bridges form between cysteine 89–cysteine 133, cysteine 122–cysteine 170, and cysteine 126–cysteine 172. Residues arginine 183–lysine 225 constitute a propeptide, removed in mature form.

Belongs to the PDGF/VEGF growth factor family. In terms of assembly, antiparallel homodimer; disulfide-linked. Antiparallel heterodimer with PDGFA; disulfide-linked. The PDGFB homodimer interacts with PDGFRA and PDGFRB homodimers, and with heterodimers formed by PDGFRA and PDGFRB. The heterodimer composed of PDGFA and PDGFB interacts with PDGFRB homodimers, and with heterodimers formed by PDGFRA and PDGFRB. Interacts with XLKD1. Interacts with LRP1. Interacts with SORL1 (via the N-terminal ectodomain). Interacts with CD82; this interaction inhibits PDGFB-mediated signaling pathway. In terms of tissue distribution, expressed in a distinct subpopulation of smooth muscle cells in injured arteries.

Its subcellular location is the secreted. In terms of biological role, growth factor that plays an essential role in the regulation of embryonic development, cell proliferation, cell migration, survival and chemotaxis. Potent mitogen for cells of mesenchymal origin. Required for normal proliferation and recruitment of pericytes and vascular smooth muscle cells in the central nervous system, skin, lung, heart and placenta. Required for normal blood vessel development, and for normal development of kidney glomeruli. Plays an important role in wound healing. Signaling is modulated by the formation of heterodimers with PDGFA. The protein is Platelet-derived growth factor subunit B (Pdgfb) of Rattus norvegicus (Rat).